We begin with the raw amino-acid sequence, 193 residues long: NADH-quinone oxidoreductase subunit B (193 aa).

The [4Fe-4S] cluster site is built by C72, C73, C137, and C167.

It belongs to the complex I 20 kDa subunit family. NDH-1 is composed of 14 different subunits. Subunits NuoB, C, D, E, F, and G constitute the peripheral sector of the complex. The cofactor is [4Fe-4S] cluster.

Its subcellular location is the cell inner membrane. It catalyses the reaction a quinone + NADH + 5 H(+)(in) = a quinol + NAD(+) + 4 H(+)(out). Functionally, NDH-1 shuttles electrons from NADH, via FMN and iron-sulfur (Fe-S) centers, to quinones in the respiratory chain. The immediate electron acceptor for the enzyme in this species is believed to be ubiquinone. Couples the redox reaction to proton translocation (for every two electrons transferred, four hydrogen ions are translocated across the cytoplasmic membrane), and thus conserves the redox energy in a proton gradient. The polypeptide is NADH-quinone oxidoreductase subunit B (Bartonella henselae (strain ATCC 49882 / DSM 28221 / CCUG 30454 / Houston 1) (Rochalimaea henselae)).